We begin with the raw amino-acid sequence, 172 residues long: Translationally-controlled tumor protein homolog (172 aa).

A TCTP domain is found at 1–172 (MIIYKDCITE…FKDGLIIEKC (172 aa)).

Belongs to the TCTP family.

Its subcellular location is the cytoplasm. In terms of biological role, involved in calcium binding and microtubule stabilization. The protein is Translationally-controlled tumor protein homolog (tpt1) of Xenopus laevis (African clawed frog).